We begin with the raw amino-acid sequence, 86 residues long: Small ribosomal subunit protein bS16 (86 aa).

The protein belongs to the bacterial ribosomal protein bS16 family.

This is Small ribosomal subunit protein bS16 from Acidithiobacillus ferrooxidans (strain ATCC 23270 / DSM 14882 / CIP 104768 / NCIMB 8455) (Ferrobacillus ferrooxidans (strain ATCC 23270)).